Here is a 165-residue protein sequence, read N- to C-terminus: Mating factor alpha-1 (165 aa).

Positions 1-19 form a signal peptide, or 20; that stretch reads MRFPSIFTAVLFAASSALA. 4 consecutive propeptides follow at residues 20-89, 105-110, 126-131, and 147-152; these read APVN…EAEA, EAEAEA, and EADAEA.

In terms of biological role, the active factor is excreted into the culture medium by haploid cells of the alpha mating type and acts on cells of the opposite mating type (type A). It mediates the conjugation process between the two types by inhibiting the initiation of DNA synthesis in type a cells and synchronizing them with type alpha. This chain is Mating factor alpha-1 (MF(ALPHA)1), found in Saccharomyces cerevisiae (strain ATCC 204508 / S288c) (Baker's yeast).